The sequence spans 326 residues: DNA-directed RNA polymerase I subunit RPA43 (326 aa).

The disordered stretch occupies residues 179 to 202 (VINTDENNGNNNNEDNKDSNGGSN). Residues 182–202 (TDENNGNNNNEDNKDSNGGSN) are compositionally biased toward low complexity. Phosphoserine occurs at positions 244, 251, 265, 269, and 285. The segment covering 288–304 (NKESHKELDLPEVKEDN) has biased composition (basic and acidic residues). Positions 288–326 (NKESHKELDLPEVKEDNGSEIVYEENTSESNDGESSDSD) are disordered. The segment covering 309–326 (VYEENTSESNDGESSDSD) has biased composition (acidic residues).

The protein belongs to the eukaryotic RPA43 RNA polymerase subunit family. In terms of assembly, component of the RNA polymerase I (Pol I) complex consisting of 14 subunits: RPA135, RPA190, RPC40, RPA14, RPB5, RPO26, RPA43, RPB8, RPA12, RPB10, RPC19, RPC10, RPA49 and RPA34. The complex is composed of a horseshoe-shaped core containing ten subunits (RPA135, RPA190, RPB5, RPO26, RPB8, RPB10, RPC10, RPA12, RPC19 and RPC40) where RPA135 and RPA190 form the DNA-binding cleft. Outside of the core, RPA14 and RPA43 form the stalk that mediates interactions with transcription initiation factors and newly synthesized RNA. Interacts with RPO26/ABC23 and with the initiation factor RRN3. In terms of processing, contains an average of four phosphates per molecule.

The protein resides in the nucleus. Its subcellular location is the nucleolus. In terms of biological role, DNA-dependent RNA polymerases catalyze the transcription of DNA into RNA using the four ribonucleoside triphosphates as substrates. Component of RNA polymerase I (Pol I) which synthesizes ribosomal RNA precursors. Besides, RNA polymerase I has intrinsic RNA cleavage activity. Through its association with RRN3 is involved in recruitment of Pol I to rDNA promoters. In vitro, the A13-A43 subcomplex binds single-stranded RNA. The sequence is that of DNA-directed RNA polymerase I subunit RPA43 (RPA43) from Saccharomyces cerevisiae (strain ATCC 204508 / S288c) (Baker's yeast).